Here is a 208-residue protein sequence, read N- to C-terminus: Uracil phosphoribosyltransferase (208 aa).

Residues arginine 78, arginine 103, and 130 to 138 (DPMLATGGS) contribute to the 5-phospho-alpha-D-ribose 1-diphosphate site. Uracil contacts are provided by residues isoleucine 193 and 198–200 (GDA). Aspartate 199 provides a ligand contact to 5-phospho-alpha-D-ribose 1-diphosphate.

It belongs to the UPRTase family. Mg(2+) is required as a cofactor.

It catalyses the reaction UMP + diphosphate = 5-phospho-alpha-D-ribose 1-diphosphate + uracil. It participates in pyrimidine metabolism; UMP biosynthesis via salvage pathway; UMP from uracil: step 1/1. With respect to regulation, allosterically activated by GTP. Catalyzes the conversion of uracil and 5-phospho-alpha-D-ribose 1-diphosphate (PRPP) to UMP and diphosphate. This Enterobacter sp. (strain 638) protein is Uracil phosphoribosyltransferase.